The primary structure comprises 461 residues: Regulatory protein AtoC (461 aa).

The Response regulatory domain occupies Arg6–Leu120. Asp55 is subject to 4-aspartylphosphate. His73 carries the phosphohistidine modification. The Sigma-54 factor interaction domain maps to Ile145 to Val374. Residues Gly173–Glu180 and Ala236–Glu245 each bind ATP. Residues Arg433–Gln452 constitute a DNA-binding region (H-T-H motif).

Post-translationally, phosphorylated by AtoS. Contains two phosphorylation sites, which are both involved in the transduction of the acetoacetate signal. Asp-55 is probably the primary phosphorylation site, but either both residues can be phosphorylated independently by AtoS or the phosphate group can be transferred between them. In terms of processing, the N-terminus is blocked.

Its subcellular location is the cytoplasm. Its function is as follows. Member of the two-component regulatory system AtoS/AtoC. In the presence of acetoacetate, AtoS/AtoC stimulates the expression of the atoDAEB operon, leading to short chain fatty acid catabolism and activation of the poly-(R)-3-hydroxybutyrate (cPHB) biosynthetic pathway. Also induces the operon in response to spermidine. Involved in the regulation of motility and chemotaxis, via transcriptional induction of the flagellar regulon. AtoC acts by binding directly to the promoter region of the target genes. In addition to its role as a transcriptional regulator, functions as a post-translational regulator that inhibits polyamine biosynthesis via regulation of ornithine decarboxylase (ODC). This is Regulatory protein AtoC (atoC) from Escherichia coli (strain K12).